The chain runs to 231 residues: Large ribosomal subunit protein uL1 (231 aa).

This sequence belongs to the universal ribosomal protein uL1 family. As to quaternary structure, part of the 50S ribosomal subunit.

Binds directly to 23S rRNA. The L1 stalk is quite mobile in the ribosome, and is involved in E site tRNA release. In terms of biological role, protein L1 is also a translational repressor protein, it controls the translation of the L11 operon by binding to its mRNA. This Caldanaerobacter subterraneus subsp. tengcongensis (strain DSM 15242 / JCM 11007 / NBRC 100824 / MB4) (Thermoanaerobacter tengcongensis) protein is Large ribosomal subunit protein uL1.